A 221-amino-acid polypeptide reads, in one-letter code: Urease accessory protein UreF (221 aa).

Belongs to the UreF family. In terms of assembly, ureD, UreF and UreG form a complex that acts as a GTP-hydrolysis-dependent molecular chaperone, activating the urease apoprotein by helping to assemble the nickel containing metallocenter of UreC. The UreE protein probably delivers the nickel.

The protein resides in the cytoplasm. Its function is as follows. Required for maturation of urease via the functional incorporation of the urease nickel metallocenter. The sequence is that of Urease accessory protein UreF from Aliivibrio fischeri (strain ATCC 700601 / ES114) (Vibrio fischeri).